Consider the following 482-residue polypeptide: Glycogen synthase (482 aa).

Lysine 15 is a binding site for ADP-alpha-D-glucose.

Belongs to the glycosyltransferase 1 family. Bacterial/plant glycogen synthase subfamily.

It catalyses the reaction [(1-&gt;4)-alpha-D-glucosyl](n) + ADP-alpha-D-glucose = [(1-&gt;4)-alpha-D-glucosyl](n+1) + ADP + H(+). Its pathway is glycan biosynthesis; glycogen biosynthesis. In terms of biological role, synthesizes alpha-1,4-glucan chains using ADP-glucose. The chain is Glycogen synthase from Hydrogenobaculum sp. (strain Y04AAS1).